Consider the following 90-residue polypeptide: Lantipeptide prochlorosin 1.7 (90 aa).

A propeptide spanning residues 1-68 is cleaved from the precursor; the sequence is MSEEQLKAFI…DAELEGVAGG (68 aa). 2,3-didehydrobutyrine is present on residues threonine 69 and threonine 73. The lanthionine (Ser-Cys) cross-link spans 76-79; that stretch reads SITC. 2 consecutive cross-links (beta-methyllanthionine (Thr-Cys)) follow at residues 78–82 and 81–90; these read TCETC and TCDLLVGKMC.

In terms of processing, cross-links are proved in vitro, when coepressed in E.coli with the ProcM lanthionine synthetase. The lanthionine residue has a DL configuration (with 2S,6R stereochemistry), whereas the beta-methyllanthionine residues have a DL configuration (with 2S,3S,6R stereochemistry). Post-translationally, maturation of prochlorosin involves the enzymatic conversion of Thr, and Ser into dehydrated AA and the formation of thioether bonds with cysteines. This is followed by membrane translocation and cleavage of the modified precursor.

The protein resides in the secreted. Its function is as follows. Lanthionine-containing peptide (lantipeptide) with unknown function. Does not show antibiotic activity against Lactococcus lactis 117 and Bacillus subtilis 6633 bacteria. Organisms that produce this peptide live in oligotrophic environments at very dilute concentrations, suggesting this peptide is not secreted to influence other bacteria. This chain is Lantipeptide prochlorosin 1.7, found in Prochlorococcus marinus (strain MIT 9313).